The following is a 435-amino-acid chain: tRNA(Ile)-lysidine synthase (435 aa).

An ATP-binding site is contributed by 25–30 (SGGLDS).

It belongs to the tRNA(Ile)-lysidine synthase family.

Its subcellular location is the cytoplasm. The catalysed reaction is cytidine(34) in tRNA(Ile2) + L-lysine + ATP = lysidine(34) in tRNA(Ile2) + AMP + diphosphate + H(+). Functionally, ligates lysine onto the cytidine present at position 34 of the AUA codon-specific tRNA(Ile) that contains the anticodon CAU, in an ATP-dependent manner. Cytidine is converted to lysidine, thus changing the amino acid specificity of the tRNA from methionine to isoleucine. The polypeptide is tRNA(Ile)-lysidine synthase (Photobacterium profundum (strain SS9)).